The chain runs to 126 residues: Small ribosomal subunit protein uS13 (126 aa).

Residues 92–126 are disordered; that stretch reads HRMGLPVRGQRTRTNARTRRGRRQTVAGKKKAPGK. The span at 101 to 126 shows a compositional bias: basic residues; that stretch reads QRTRTNARTRRGRRQTVAGKKKAPGK.

This sequence belongs to the universal ribosomal protein uS13 family. As to quaternary structure, part of the 30S ribosomal subunit. Forms a loose heterodimer with protein S19. Forms two bridges to the 50S subunit in the 70S ribosome.

Functionally, located at the top of the head of the 30S subunit, it contacts several helices of the 16S rRNA. In the 70S ribosome it contacts the 23S rRNA (bridge B1a) and protein L5 of the 50S subunit (bridge B1b), connecting the 2 subunits; these bridges are implicated in subunit movement. Contacts the tRNAs in the A and P-sites. This is Small ribosomal subunit protein uS13 from Nostoc sp. (strain PCC 7120 / SAG 25.82 / UTEX 2576).